The sequence spans 697 residues: Polyribonucleotide nucleotidyltransferase (697 aa).

Mg(2+) contacts are provided by Asp484 and Asp490. A KH domain is found at 551 to 610 (PRITTIWVKTDKIRDVIGSGGKNIRGITEATGVSIDIEDSGRINIASTSKEACDKAIKMI). In terms of domain architecture, S1 motif spans 620–688 (GKLYMGTVKK…KQGKIKLSRK (69 aa)).

It belongs to the polyribonucleotide nucleotidyltransferase family. Mg(2+) is required as a cofactor.

Its subcellular location is the cytoplasm. The catalysed reaction is RNA(n+1) + phosphate = RNA(n) + a ribonucleoside 5'-diphosphate. Involved in mRNA degradation. Catalyzes the phosphorolysis of single-stranded polyribonucleotides processively in the 3'- to 5'-direction. The chain is Polyribonucleotide nucleotidyltransferase from Geobacter sulfurreducens (strain ATCC 51573 / DSM 12127 / PCA).